Consider the following 242-residue polypeptide: Small ribosomal subunit protein eS6 (242 aa).

A compositionally biased stretch (basic and acidic residues) spans E219–K229. A disordered region spans residues E219–A242. Residues S233 and S234 each carry the phosphoserine modification.

It belongs to the eukaryotic ribosomal protein eS6 family. In terms of processing, phosphorylated.

This chain is Small ribosomal subunit protein eS6 (RPS6), found in Yarrowia lipolytica (strain CLIB 122 / E 150) (Yeast).